A 492-amino-acid chain; its full sequence is UTP--glucose-1-phosphate uridylyltransferase (492 aa).

Residues 110–113 (LNGG), lysine 124, glutamine 183, and glycine 210 each bind UTP. 112–113 (GG) contacts substrate. Lysine 124 serves as a coordination point for Mg(2+). Substrate-binding positions include histidine 211 and 239-241 (NID). Positions 241 and 379 each coordinate UTP. Aspartate 241 contributes to the Mg(2+) binding site. Lysine 379 is an active-site residue. The interval 441–492 (VLTVSGNVLFGKNVVLKGTVIILADEKSKICVPDGSVLEDNIIYGNLPIIDH) is oligomerization.

This sequence belongs to the UDPGP type 1 family. Homooctamer.

It catalyses the reaction alpha-D-glucose 1-phosphate + UTP + H(+) = UDP-alpha-D-glucose + diphosphate. Functionally, plays a central role as a glucosyl donor in cellular metabolic pathways. The chain is UTP--glucose-1-phosphate uridylyltransferase (UGP1) from Encephalitozoon cuniculi (strain GB-M1) (Microsporidian parasite).